The sequence spans 268 residues: Casein kinase II subunit beta (268 aa).

The tract at residues 222–268 (LSNNNQNNQNNNINNNNNNNNNNNNNNNNNNNNQQNNNNQQNNNTNK) is disordered. Residues 224 to 268 (NNNQNNQNNNINNNNNNNNNNNNNNNNNNNNQQNNNNQQNNNTNK) show a composition bias toward low complexity.

This sequence belongs to the casein kinase 2 subunit beta family. As to quaternary structure, casein kinase II/CK2 is a tetramer composed of two alpha subunit and two beta subunits.

Regulatory subunit of casein kinase II/CK2. As part of the kinase complex regulates the basal catalytic activity of the alpha subunit a constitutively active serine/threonine-protein kinase that phosphorylates a large number of substrates containing acidic residues C-terminal to the phosphorylated serine or threonine. The sequence is that of Casein kinase II subunit beta (csnk2b) from Dictyostelium discoideum (Social amoeba).